The chain runs to 134 residues: Profilin-3 (134 aa).

Cysteines 13 and 118 form a disulfide. The Involved in PIP2 interaction signature appears at 84–100 (AVIRGKKGSGGITIKKT). At T114 the chain carries Phosphothreonine.

This sequence belongs to the profilin family. As to quaternary structure, occurs in many kinds of cells as a complex with monomeric actin in a 1:1 ratio. In terms of processing, phosphorylated by MAP kinases.

The protein resides in the cytoplasm. It localises to the cytoskeleton. Binds to actin and affects the structure of the cytoskeleton. At high concentrations, profilin prevents the polymerization of actin, whereas it enhances it at low concentrations. This Olea europaea (Common olive) protein is Profilin-3.